A 438-amino-acid chain; its full sequence is Glutamyl-tRNA(Gln) amidotransferase subunit D (438 aa).

Positions Pro-92 to Asn-422 constitute an Asparaginase/glutaminase domain. Residues Thr-102, Thr-178, Asp-179, and Lys-256 contribute to the active site.

It belongs to the asparaginase 1 family. GatD subfamily. As to quaternary structure, heterodimer of GatD and GatE.

The enzyme catalyses L-glutamyl-tRNA(Gln) + L-glutamine + ATP + H2O = L-glutaminyl-tRNA(Gln) + L-glutamate + ADP + phosphate + H(+). Functionally, allows the formation of correctly charged Gln-tRNA(Gln) through the transamidation of misacylated Glu-tRNA(Gln) in organisms which lack glutaminyl-tRNA synthetase. The reaction takes place in the presence of glutamine and ATP through an activated gamma-phospho-Glu-tRNA(Gln). The GatDE system is specific for glutamate and does not act on aspartate. This chain is Glutamyl-tRNA(Gln) amidotransferase subunit D, found in Pyrococcus furiosus (strain ATCC 43587 / DSM 3638 / JCM 8422 / Vc1).